The following is a 379-amino-acid chain: Homoserine O-succinyltransferase (379 aa).

Residues 48–357 (NAVLICHALS…SAHGHDAFLM (310 aa)) enclose the AB hydrolase-1 domain. S154 serves as the catalytic Nucleophile. R224 is a binding site for substrate. Active-site residues include D319 and H352. D353 serves as a coordination point for substrate.

This sequence belongs to the AB hydrolase superfamily. MetX family. In terms of assembly, homodimer.

It is found in the cytoplasm. The catalysed reaction is L-homoserine + succinyl-CoA = O-succinyl-L-homoserine + CoA. Its pathway is amino-acid biosynthesis; L-methionine biosynthesis via de novo pathway; O-succinyl-L-homoserine from L-homoserine: step 1/1. Transfers a succinyl group from succinyl-CoA to L-homoserine, forming succinyl-L-homoserine. The sequence is that of Homoserine O-succinyltransferase from Neisseria meningitidis serogroup A / serotype 4A (strain DSM 15465 / Z2491).